The sequence spans 223 residues: 7-cyano-7-deazaguanine synthase (223 aa).

Position 15 to 25 (15 to 25 (FSGGQDSTTCL)) interacts with ATP. Residues cysteine 191, cysteine 200, cysteine 203, and cysteine 206 each coordinate Zn(2+).

This sequence belongs to the QueC family. In terms of assembly, homodimer. The cofactor is Zn(2+).

The enzyme catalyses 7-carboxy-7-deazaguanine + NH4(+) + ATP = 7-cyano-7-deazaguanine + ADP + phosphate + H2O + H(+). It functions in the pathway purine metabolism; 7-cyano-7-deazaguanine biosynthesis. In terms of biological role, catalyzes the ATP-dependent conversion of 7-carboxy-7-deazaguanine (CDG) to 7-cyano-7-deazaguanine (preQ(0)). The sequence is that of 7-cyano-7-deazaguanine synthase from Staphylococcus saprophyticus subsp. saprophyticus (strain ATCC 15305 / DSM 20229 / NCIMB 8711 / NCTC 7292 / S-41).